The following is a 173-amino-acid chain: MKTKEIVDDMTMKRAITRITYEIIERNKNLDNIVLAGIKTRGVFIAKRIQERLKQLEGIDVPLGELDTKPFRDDMKVEDDTTNMTANVNDRDVILVDDVLYTGRTIRAAIDNIVSLGRPARVSLAVLVDRGHRELPIRADYVGKNIPTSRSEEIIVHMAEIDGQDAVLLVEGA.

The PRPP-binding motif lies at 93 to 105; it reads VILVDDVLYTGRT.

The protein belongs to the purine/pyrimidine phosphoribosyltransferase family. PyrR subfamily. Homodimer and homohexamer; in equilibrium.

The catalysed reaction is UMP + diphosphate = 5-phospho-alpha-D-ribose 1-diphosphate + uracil. Functionally, regulates transcriptional attenuation of the pyrimidine nucleotide (pyr) operon by binding in a uridine-dependent manner to specific sites on pyr mRNA. This disrupts an antiterminator hairpin in the RNA and favors formation of a downstream transcription terminator, leading to a reduced expression of downstream genes. Also displays a weak uracil phosphoribosyltransferase activity which is not physiologically significant. The sequence is that of Bifunctional protein PyrR from Streptococcus suis (strain 05ZYH33).